Here is a 599-residue protein sequence, read N- to C-terminus: Stromal 70 kDa heat shock-related protein, chloroplastic (599 aa).

The disordered stretch occupies residues asparagine 545–lysine 573. Positions glycine 554–glutamine 568 are enriched in low complexity.

The protein belongs to the heat shock protein 70 family.

It localises to the plastid. It is found in the chloroplast stroma. Functionally, interacts with newly imported chloroplast proteins to assist in their maturation. In Spinacia oleracea (Spinach), this protein is Stromal 70 kDa heat shock-related protein, chloroplastic (CHSP70).